Here is a 102-residue protein sequence, read N- to C-terminus: Large ribosomal subunit protein uL24 (102 aa).

Belongs to the universal ribosomal protein uL24 family. As to quaternary structure, part of the 50S ribosomal subunit.

Functionally, one of two assembly initiator proteins, it binds directly to the 5'-end of the 23S rRNA, where it nucleates assembly of the 50S subunit. In terms of biological role, one of the proteins that surrounds the polypeptide exit tunnel on the outside of the subunit. This Cupriavidus necator (strain ATCC 17699 / DSM 428 / KCTC 22496 / NCIMB 10442 / H16 / Stanier 337) (Ralstonia eutropha) protein is Large ribosomal subunit protein uL24.